The sequence spans 48 residues: uncharacterized protein (48 aa).

A helical membrane pass occupies residues I6–L26.

It localises to the host membrane. This is an uncharacterized protein from Spiroplasma melliferum (SpV4).